Consider the following 367-residue polypeptide: Voltage-gated potassium channel subunit beta-2 (367 aa).

Thr56, Trp57, Gln63, and Asp85 together coordinate NADP(+). The Proton donor/acceptor role is filled by Tyr90. NADP(+) is bound by residues Asn158, Ser188, Arg189, Gln214, Trp243, Ser244, Pro245, Leu246, Ala247, Cys248, Lys254, Tyr262, Arg264, Gly323, Ser325, Gln329, Glu332, and Asn333.

Belongs to the shaker potassium channel beta subunit family. Forms heteromultimeric complex with alpha subunits.

It is found in the cytoplasm. Its subcellular location is the membrane. It localises to the cell membrane. The protein resides in the cell projection. The protein localises to the axon. It is found in the synapse. Its subcellular location is the synaptosome. It localises to the cytoskeleton. Its function is as follows. Regulatory subunit of the voltage-gated potassium (Kv) Shaker channels composed of pore-forming and potassium-conducting alpha subunits and of regulatory beta subunits. The beta-2/KCNAB2 cytoplasmic subunit may promote potassium channel closure via a mechanism that does not involve physical obstruction of the channel pore. Enhances current amplitude of Kv1.1/KCNA1 and Kv2.2/KCNA2 channels. May display nicotinamide adenine dinucleotide phosphate (NADPH)-dependent aldoketoreductase activity by catalyzing the NADPH-dependent reduction of a wide range of aldehyde and ketone substrates. The binding of oxidized and reduced nucleotide may alter Kv channel gating and contribute to dynamic fine tuning of cell excitability. In Xenopus laevis (African clawed frog), this protein is Voltage-gated potassium channel subunit beta-2 (kcnab2).